Consider the following 455-residue polypeptide: UDP-N-acetylmuramoylalanine--D-glutamate ligase (455 aa).

120-126 (GSNGKTT) serves as a coordination point for ATP.

This sequence belongs to the MurCDEF family.

It is found in the cytoplasm. The enzyme catalyses UDP-N-acetyl-alpha-D-muramoyl-L-alanine + D-glutamate + ATP = UDP-N-acetyl-alpha-D-muramoyl-L-alanyl-D-glutamate + ADP + phosphate + H(+). The protein operates within cell wall biogenesis; peptidoglycan biosynthesis. Its function is as follows. Cell wall formation. Catalyzes the addition of glutamate to the nucleotide precursor UDP-N-acetylmuramoyl-L-alanine (UMA). The sequence is that of UDP-N-acetylmuramoylalanine--D-glutamate ligase from Pediococcus pentosaceus (strain ATCC 25745 / CCUG 21536 / LMG 10740 / 183-1w).